A 358-amino-acid chain; its full sequence is Probable aminomethyltransferase (358 aa).

The protein belongs to the GcvT family. In terms of assembly, the glycine cleavage system is composed of four proteins: P, T, L and H.

The catalysed reaction is N(6)-[(R)-S(8)-aminomethyldihydrolipoyl]-L-lysyl-[protein] + (6S)-5,6,7,8-tetrahydrofolate = N(6)-[(R)-dihydrolipoyl]-L-lysyl-[protein] + (6R)-5,10-methylene-5,6,7,8-tetrahydrofolate + NH4(+). The glycine cleavage system catalyzes the degradation of glycine. The protein is Probable aminomethyltransferase of Natronomonas pharaonis (strain ATCC 35678 / DSM 2160 / CIP 103997 / JCM 8858 / NBRC 14720 / NCIMB 2260 / Gabara) (Halobacterium pharaonis).